Consider the following 187-residue polypeptide: Elongation factor P (187 aa).

Belongs to the elongation factor P family.

The protein localises to the cytoplasm. Its pathway is protein biosynthesis; polypeptide chain elongation. Its function is as follows. Involved in peptide bond synthesis. Stimulates efficient translation and peptide-bond synthesis on native or reconstituted 70S ribosomes in vitro. Probably functions indirectly by altering the affinity of the ribosome for aminoacyl-tRNA, thus increasing their reactivity as acceptors for peptidyl transferase. This is Elongation factor P from Arthrobacter sp. (strain FB24).